Reading from the N-terminus, the 427-residue chain is Probable purple acid phosphatase 20 (427 aa).

Residues 1 to 21 form the signal peptide; that stretch reads MVKVLGLVAILLIVLAGNVLS. Residue N85 is glycosylated (N-linked (GlcNAc...) asparagine). Fe cation-binding residues include D147, D174, and Y177. Position 174 (D174) interacts with Zn(2+). Zn(2+) contacts are provided by N207 and H291. N207 serves as a coordination point for substrate. H301 functions as the Proton donor in the catalytic mechanism. A Zn(2+)-binding site is contributed by H330. 330–332 contacts substrate; it reads HVH. Fe cation is bound at residue H332. A glycan (N-linked (GlcNAc...) asparagine) is linked at N392.

This sequence belongs to the metallophosphoesterase superfamily. Purple acid phosphatase family. As to quaternary structure, homodimer. Fe cation is required as a cofactor. It depends on Zn(2+) as a cofactor. In terms of tissue distribution, expressed flowers and siliques.

The protein resides in the secreted. It catalyses the reaction a phosphate monoester + H2O = an alcohol + phosphate. The protein is Probable purple acid phosphatase 20 (PAP20) of Arabidopsis thaliana (Mouse-ear cress).